The primary structure comprises 834 residues: ATP-dependent 6-phosphofructokinase (834 aa).

The interval 1 to 426 is N-terminal catalytic PFK domain 1; the sequence is MTTTSKIIND…FYEIFIACSN (426 aa). ATP is bound by residues Gly-62, 123–124, and 153–156; these read RS and GDGS. Asp-154 provides a ligand contact to Mg(2+). Substrate-binding positions include 199-201, Arg-236, 243-245, Glu-299, Arg-326, and 332-335; these read SID, MGR, and HVQR. Asp-201 acts as the Proton acceptor in catalysis. The tract at residues 427–437 is interdomain linker; sequence LHRRKVESKGM. A C-terminal regulatory PFK domain 2 region spans residues 438–834; that stretch reads GVLILHSGGP…DPNVNPQFTL (397 aa). Residues Arg-507, 566-570, Arg-603, 610-612, Glu-666, Arg-692, 698-701, and Arg-764 contribute to the beta-D-fructose 2,6-bisphosphate site; these read TIANN, MGA, and HLQQ. The disordered stretch occupies residues 799 to 834; that stretch reads SNLSEQDRPIKKSDISSPTSYSQKTFDPNVNPQFTL. The span at 803–812 shows a compositional bias: basic and acidic residues; the sequence is EQDRPIKKSD. Residues 813 to 834 show a composition bias toward polar residues; that stretch reads ISSPTSYSQKTFDPNVNPQFTL.

The protein belongs to the phosphofructokinase type A (PFKA) family. ATP-dependent PFK group I subfamily. Eukaryotic two domain clade 'E' sub-subfamily. In terms of assembly, homotetramer. It depends on Mg(2+) as a cofactor. The N-terminus is blocked.

It is found in the cytoplasm. The enzyme catalyses beta-D-fructose 6-phosphate + ATP = beta-D-fructose 1,6-bisphosphate + ADP + H(+). Its pathway is carbohydrate degradation; glycolysis; D-glyceraldehyde 3-phosphate and glycerone phosphate from D-glucose: step 3/4. With respect to regulation, allosterically activated by ADP, AMP, or fructose 2,6-bisphosphate, and allosterically inhibited by ATP or citrate. Its function is as follows. Catalyzes the phosphorylation of D-fructose 6-phosphate to fructose 1,6-bisphosphate by ATP, the first committing step of glycolysis. This chain is ATP-dependent 6-phosphofructokinase (pfkA), found in Dictyostelium discoideum (Social amoeba).